The sequence spans 409 residues: Imidazolonepropionase (409 aa).

2 residues coordinate Fe(3+): histidine 78 and histidine 80. Zn(2+) contacts are provided by histidine 78 and histidine 80. 3 residues coordinate 4-imidazolone-5-propanoate: arginine 87, tyrosine 150, and histidine 183. N-formimidoyl-L-glutamate is bound at residue tyrosine 150. Histidine 248 is a Fe(3+) binding site. Residue histidine 248 coordinates Zn(2+). Glutamine 251 contributes to the 4-imidazolone-5-propanoate binding site. Aspartate 323 is a binding site for Fe(3+). A Zn(2+)-binding site is contributed by aspartate 323. Positions 325 and 327 each coordinate N-formimidoyl-L-glutamate. Threonine 328 is a 4-imidazolone-5-propanoate binding site.

This sequence belongs to the metallo-dependent hydrolases superfamily. HutI family. Requires Zn(2+) as cofactor. Fe(3+) serves as cofactor.

It localises to the cytoplasm. It catalyses the reaction 4-imidazolone-5-propanoate + H2O = N-formimidoyl-L-glutamate. It functions in the pathway amino-acid degradation; L-histidine degradation into L-glutamate; N-formimidoyl-L-glutamate from L-histidine: step 3/3. In terms of biological role, catalyzes the hydrolytic cleavage of the carbon-nitrogen bond in imidazolone-5-propanoate to yield N-formimidoyl-L-glutamate. It is the third step in the universal histidine degradation pathway. This chain is Imidazolonepropionase, found in Mesorhizobium japonicum (strain LMG 29417 / CECT 9101 / MAFF 303099) (Mesorhizobium loti (strain MAFF 303099)).